The chain runs to 345 residues: MRVADFSFDLPDELIARYPMPNRTASRLLTLDGNSGAVADKQFTDILEMVNPGDLMVFNNTRVIPARVFGQKQTGGKLEILVERMLDDKRILAHVRSSKSPKPGTIICLDGGYEMTMLARHDTLFELELNSESTILEVLEEVGHMPLPPYIDRPDEDADKERYQTVYNQNPGAVAAPTAGLHFDDALLAALKEKGVNVAFVTLHVGAGTFQPVRVDSILDHKMHSEWAEVPQDVVDSIKATKAAGNRVIAVGTTSVRSLESAAKASEGELQAYSNDTDIFIYPGYEFQVVDAMVTNFHLPESTLIMLISAFAGFDEVKNAYQHAIAQKYRFFSYGDAMFVTKKAI.

It belongs to the QueA family. Monomer.

It localises to the cytoplasm. It carries out the reaction 7-aminomethyl-7-carbaguanosine(34) in tRNA + S-adenosyl-L-methionine = epoxyqueuosine(34) in tRNA + adenine + L-methionine + 2 H(+). The protein operates within tRNA modification; tRNA-queuosine biosynthesis. Functionally, transfers and isomerizes the ribose moiety from AdoMet to the 7-aminomethyl group of 7-deazaguanine (preQ1-tRNA) to give epoxyqueuosine (oQ-tRNA). This Shewanella loihica (strain ATCC BAA-1088 / PV-4) protein is S-adenosylmethionine:tRNA ribosyltransferase-isomerase.